Here is a 263-residue protein sequence, read N- to C-terminus: Glutamate 5-kinase (263 aa).

Position 15 (Lys-15) interacts with ATP. The substrate site is built by Ser-55, Asp-142, and Asn-154. ATP-binding positions include 174-175 (SD) and 216-222 (TGGIETK).

This sequence belongs to the glutamate 5-kinase family.

The protein localises to the cytoplasm. It carries out the reaction L-glutamate + ATP = L-glutamyl 5-phosphate + ADP. It functions in the pathway amino-acid biosynthesis; L-proline biosynthesis; L-glutamate 5-semialdehyde from L-glutamate: step 1/2. In terms of biological role, catalyzes the transfer of a phosphate group to glutamate to form L-glutamate 5-phosphate. This chain is Glutamate 5-kinase, found in Alkaliphilus oremlandii (strain OhILAs) (Clostridium oremlandii (strain OhILAs)).